Reading from the N-terminus, the 146-residue chain is Transcriptional regulator MraZ (146 aa).

2 consecutive SpoVT-AbrB domains span residues 7–54 (HVTN…GPEL) and 83–126 (GVYV…DPQA).

Belongs to the MraZ family. As to quaternary structure, forms oligomers.

Its subcellular location is the cytoplasm. It localises to the nucleoid. The chain is Transcriptional regulator MraZ from Rhizobium meliloti (strain 1021) (Ensifer meliloti).